Reading from the N-terminus, the 424-residue chain is O-methyltransferase aunD (424 aa).

Asp275 serves as a coordination point for S-adenosyl-L-methionine. His326 functions as the Proton acceptor in the catalytic mechanism.

This sequence belongs to the class I-like SAM-binding methyltransferase superfamily. Cation-independent O-methyltransferase family.

It participates in secondary metabolite biosynthesis. In terms of biological role, O-methyltransferase; part of the gene cluster that mediates the biosynthesis of aurasperone B, a dimeric gamma-naphthopyrone. The first step in the biosynthesis of aurasperone B is the production of gamma-naphthopyrone precursor YWA1 by the non-reducing polyketide synthase albA, via condensation of one acetyl-CoA starter unit with 6 malonyl-CoA units. YWA1 is then methylated by aunE at position C-6 to yield foncesin which is further methylated at position C-8 by aunD to produce fonsecin B. A key enzyme in the biosynthetic pathway is the cytochrome P450 monooxygenase aunB which catalyzes the oxidative dimerization of fonsecin B to aurasperone B. AunB also catalyzes the oxidative dimerization of rubrofusarin B into aurasperone A. This is O-methyltransferase aunD from Aspergillus niger (strain ATCC 1015 / CBS 113.46 / FGSC A1144 / LSHB Ac4 / NCTC 3858a / NRRL 328 / USDA 3528.7).